Reading from the N-terminus, the 126-residue chain is Protein ApaG (126 aa).

One can recognise an ApaG domain in the interval 2–126 (TELETSIKID…FRLSIPGLLH (125 aa)).

This chain is Protein ApaG, found in Shewanella woodyi (strain ATCC 51908 / MS32).